The following is a 211-amino-acid chain: Thymidine kinase (211 aa).

Residues 9-16 (STMNAGKS) and 87-90 (DEAQ) contribute to the ATP site. The Proton acceptor role is filled by glutamate 88. Zn(2+)-binding residues include cysteine 145, cysteine 147, cysteine 182, and histidine 185.

Belongs to the thymidine kinase family. Homotetramer.

The protein localises to the cytoplasm. The enzyme catalyses thymidine + ATP = dTMP + ADP + H(+). This chain is Thymidine kinase, found in Rhodopirellula baltica (strain DSM 10527 / NCIMB 13988 / SH1).